The following is a 269-amino-acid chain: Proline-rich protein 7 (269 aa).

Residues 1-9 lie on the Extracellular side of the membrane; that stretch reads MVMSQGTYT. The required for interaction with NMDA receptors stretch occupies residues 1-44; sequence MVMSQGTYTFLTCFAGFWLIWGLIVLLCCFCSFLRRRLKRRQEE. Residues 2–39 are required for membrane localization; sequence VMSQGTYTFLTCFAGFWLIWGLIVLLCCFCSFLRRRLK. A helical; Signal-anchor for type III membrane protein transmembrane segment spans residues 10–30; it reads FLTCFAGFWLIWGLIVLLCCF. Topologically, residues 31–269 are cytoplasmic; the sequence is CSFLRRRLKR…IPLFGRTTAV (239 aa). Disordered regions lie at residues 63-83 and 97-121; these read GSLA…RSRL and PLLH…PHPP. Ser-64 carries the post-translational modification Phosphoserine. Residues 108–117 show a composition bias toward basic residues; it reads AHPHPHHHAL. The interval 146 to 166 is required for internalization; that stretch reads PCYEEAVLMAEPPPPYSEVLT. The segment at 146–269 is required for apoptosis induction; the sequence is PCYEEAVLMA…IPLFGRTTAV (124 aa). A PDZ-binding motif is present at residues 267 to 269; the sequence is TAV.

Forms a complex with NMDA receptor zeta subunit GRIN1 and epsilon subunit GRIN2B. Interacts with GRIN2B. Interacts with GRIN1; the interaction is reduced upon NMDA receptor activity. Found in a postsynaptic membrane complex with DLG4 and GRIN1. Interacts with DLG4 (via PDZ3 domain and to lesser degree via PDZ2 domain). Interacts with JUN. Found in a complex with JUN and FBXW7. Interacts with JUN and FBXW7; the interaction inhibits ubiquitination-mediated JUN degradation promoting its phosphorylation and transcriptional activity. Interacts with SRC. Post-translationally, palmitoylated. Tyrosine phosphorylated, possibly by SRC. Highly expressed in brain, moderately expressed in lymph nodes and T cells and low expression in thymus and spleen. Expressed in single positive progenitor thymocytes, particularly in CD8 single positive thymocytes.

It is found in the cell membrane. It localises to the postsynaptic cell membrane. Its subcellular location is the postsynaptic density membrane. The protein localises to the cytoplasm. The protein resides in the perinuclear region. It is found in the synapse. It localises to the cell projection. Its subcellular location is the dendrite. The protein localises to the nucleus. Its function is as follows. Acts as a synapse-to-nucleus messenger to promote NMDA receptor-mediated excitotoxicity in neurons in a JUN-dependent manner. Inhibits ubiquitination-mediated degradation and promotes phosphorylation and transcriptional activity of transcription factor JUN. Might play a redundant role in the regulation of T cell receptor signaling. Might promote apoptosis in T cells. The protein is Proline-rich protein 7 (Prr7) of Mus musculus (Mouse).